The sequence spans 159 residues: Ribosomal RNA large subunit methyltransferase H (159 aa).

Positions 76 and 108 each coordinate S-adenosyl-L-methionine.

Belongs to the RNA methyltransferase RlmH family. Homodimer.

The protein localises to the cytoplasm. It carries out the reaction pseudouridine(1915) in 23S rRNA + S-adenosyl-L-methionine = N(3)-methylpseudouridine(1915) in 23S rRNA + S-adenosyl-L-homocysteine + H(+). Specifically methylates the pseudouridine at position 1915 (m3Psi1915) in 23S rRNA. This Pediococcus pentosaceus (strain ATCC 25745 / CCUG 21536 / LMG 10740 / 183-1w) protein is Ribosomal RNA large subunit methyltransferase H.